A 785-amino-acid chain; its full sequence is Leucyl aminopeptidase (785 aa).

Substrate contacts are provided by residues glutamate 106 and 238 to 242 (GAMEN). Position 273 (histidine 273) interacts with Zn(2+). Glutamate 274 serves as the catalytic Proton acceptor. Positions 277 and 296 each coordinate Zn(2+).

This sequence belongs to the peptidase M1 family. Co-immunoprecipitates with the 60 kDa chaperonin. The cofactor is Zn(2+). In terms of processing, can be phosphorylated by cell extracts.

Its subcellular location is the cytoplasm. It catalyses the reaction Release of an N-terminal amino acid, Xaa-|-Yaa-, in which Xaa is preferably Leu, but may be other amino acids including Pro although not Arg or Lys, and Yaa may be Pro. Amino acid amides and methyl esters are also readily hydrolyzed, but rates on arylamides are exceedingly low.. In terms of biological role, preferentially acts as a leucyl-aminopeptidase, although it also has activity against other substrates. The chain is Leucyl aminopeptidase (ape2) from Saccharolobus solfataricus (strain ATCC 35092 / DSM 1617 / JCM 11322 / P2) (Sulfolobus solfataricus).